A 397-amino-acid polypeptide reads, in one-letter code: L-asparaginase-like protein CG4372 (397 aa).

The signal sequence occupies residues 1–22 (MLAQSCCLRLLILLLLFTTIGS). 3 disulfide bridges follow: Cys-90–Cys-95, Cys-189–Cys-205, and Cys-344–Cys-371.

This sequence belongs to the Ntn-hydrolase family.

The chain is L-asparaginase-like protein CG4372 from Drosophila melanogaster (Fruit fly).